The following is a 154-amino-acid chain: Large ribosomal subunit protein bL9 (154 aa).

This sequence belongs to the bacterial ribosomal protein bL9 family.

Functionally, binds to the 23S rRNA. This is Large ribosomal subunit protein bL9 from Buchnera aphidicola subsp. Baizongia pistaciae (strain Bp).